The primary structure comprises 286 residues: 4-diphosphocytidyl-2-C-methyl-D-erythritol kinase (286 aa).

Lysine 11 is an active-site residue. Proline 93–serine 103 is a binding site for ATP. Aspartate 135 is an active-site residue.

The protein belongs to the GHMP kinase family. IspE subfamily.

It catalyses the reaction 4-CDP-2-C-methyl-D-erythritol + ATP = 4-CDP-2-C-methyl-D-erythritol 2-phosphate + ADP + H(+). It participates in isoprenoid biosynthesis; isopentenyl diphosphate biosynthesis via DXP pathway; isopentenyl diphosphate from 1-deoxy-D-xylulose 5-phosphate: step 3/6. Its function is as follows. Catalyzes the phosphorylation of the position 2 hydroxy group of 4-diphosphocytidyl-2C-methyl-D-erythritol. This chain is 4-diphosphocytidyl-2-C-methyl-D-erythritol kinase, found in Prosthecochloris aestuarii (strain DSM 271 / SK 413).